A 55-amino-acid polypeptide reads, in one-letter code: Mitochondrial import receptor subunit TOM7 homolog (55 aa).

Residues 1–20 are Cytoplasmic-facing; it reads MVKLSKEAKQRLQQLFKGGQ. Residues 21 to 36 form a helical membrane-spanning segment; sequence FAIRWGFIPLVIYLGF. At 37–55 the chain is on the mitochondrial intermembrane side; that stretch reads KRGADPGMPEPTVLSLLWG.

This sequence belongs to the Tom7 family. Forms part of the preprotein translocase complex of the outer mitochondrial membrane (TOM complex) which consists of at least 7 different proteins (TOMM5, TOMM6, TOMM7, TOMM20, TOMM22, TOMM40 and TOMM70).

The protein resides in the mitochondrion outer membrane. Its function is as follows. Required for assembly and stability of the TOM complex. Positive regulator of PRKN translocation to damaged mitochondria. Acts probably by stabilizing PINK1 on the outer membrane of depolarized mitochondria. The sequence is that of Mitochondrial import receptor subunit TOM7 homolog (TOMM7) from Bos taurus (Bovine).